The chain runs to 252 residues: tRNA (guanine-N(1)-)-methyltransferase (252 aa).

Residues Gly113 and 133–138 (LGDYVL) each bind S-adenosyl-L-methionine.

It belongs to the RNA methyltransferase TrmD family. In terms of assembly, homodimer.

It is found in the cytoplasm. The enzyme catalyses guanosine(37) in tRNA + S-adenosyl-L-methionine = N(1)-methylguanosine(37) in tRNA + S-adenosyl-L-homocysteine + H(+). In terms of biological role, specifically methylates guanosine-37 in various tRNAs. The chain is tRNA (guanine-N(1)-)-methyltransferase from Stenotrophomonas maltophilia (strain K279a).